Consider the following 414-residue polypeptide: Esterase FrsA (414 aa).

It belongs to the FrsA family.

It catalyses the reaction a carboxylic ester + H2O = an alcohol + a carboxylate + H(+). Catalyzes the hydrolysis of esters. The chain is Esterase FrsA from Escherichia coli O81 (strain ED1a).